A 244-amino-acid polypeptide reads, in one-letter code: ATP synthase subunit 4, mitochondrial (244 aa).

The N-terminal 35 residues, 1 to 35, are a transit peptide targeting the mitochondrion; the sequence is MSMSMGVRGLALRSVSKTLFSQGVRCPSMVIGARY. The residue at position 144 (Ser-144) is a Phosphoserine.

It belongs to the eukaryotic ATPase B chain family. F-type ATPases have 2 components, CF(1) - the catalytic core - and CF(0) - the membrane proton channel. In yeast, the dimeric form of ATP synthase consists of 17 polypeptides: alpha, beta, gamma, delta, epsilon, 4 (B), 5 (OSCP), 6 (A), 8, 9 (C), d, E (Tim11), f, g, h, i/j and k.

The protein resides in the mitochondrion. Its subcellular location is the mitochondrion inner membrane. Functionally, mitochondrial membrane ATP synthase (F(1)F(0) ATP synthase or Complex V) produces ATP from ADP in the presence of a proton gradient across the membrane which is generated by electron transport complexes of the respiratory chain. F-type ATPases consist of two structural domains, F(1) - containing the extramembraneous catalytic core, and F(0) - containing the membrane proton channel, linked together by a central stalk and a peripheral stalk. During catalysis, ATP synthesis in the catalytic domain of F(1) is coupled via a rotary mechanism of the central stalk subunits to proton translocation. Part of the complex F(0) domain and the peripheric stalk, which acts as a stator to hold the catalytic alpha(3)beta(3) subcomplex and subunit a/ATP6 static relative to the rotary elements. The protein is ATP synthase subunit 4, mitochondrial (ATP4) of Saccharomyces cerevisiae (strain ATCC 204508 / S288c) (Baker's yeast).